A 435-amino-acid chain; its full sequence is T-cell defective protein 2 (435 aa).

The tract at residues 65–146 (NASTSFQSQP…KTPDSLRKSI (82 aa)) is disordered. Positions 322–352 (TKISAKKEKEQKKSAAKEAALKEAKEKEMRI) form a coiled coil. Residues 393-419 (FFKANPPPAPRAPQAPELASGPRRIPT) form a disordered region.

As to expression, strongly expressed in the cytoplasm of the pharynx muscle cells and several head neurons, probably the IL1s or IL2s, throughout development. Also expressed in some other unidentified neurons in the tail region. Weakly expressed in the nuclei of the T-cells and the T-cell daughters. Not expressed in gonads and in P12 cell.

It localises to the nucleus. The protein resides in the cytoplasm. May act synergistically with the Wnt pathways to control T-cell fate specification, gonad development, and P12 cell fate specification. Required for the distribution of pop-1 and tlp-1 proteins. This Caenorhabditis elegans protein is T-cell defective protein 2 (tcl-2).